The following is a 340-amino-acid chain: DNA-directed RNA polymerase subunit alpha (340 aa).

The alpha N-terminal domain (alpha-NTD) stretch occupies residues 1–237 (MSSDELVYMN…EQMNPFINFD (237 aa)). The alpha C-terminal domain (alpha-CTD) stretch occupies residues 256–340 (FNENLYRSVD…PEEDQIKEGE (85 aa)).

It belongs to the RNA polymerase alpha chain family. In terms of assembly, homodimer. The RNAP catalytic core consists of 2 alpha, 1 beta, 1 beta' and 1 omega subunit. When a sigma factor is associated with the core the holoenzyme is formed, which can initiate transcription.

The catalysed reaction is RNA(n) + a ribonucleoside 5'-triphosphate = RNA(n+1) + diphosphate. Functionally, DNA-dependent RNA polymerase catalyzes the transcription of DNA into RNA using the four ribonucleoside triphosphates as substrates. The polypeptide is DNA-directed RNA polymerase subunit alpha (Desulforapulum autotrophicum (strain ATCC 43914 / DSM 3382 / VKM B-1955 / HRM2) (Desulfobacterium autotrophicum)).